The following is a 568-amino-acid chain: 2-succinyl-5-enolpyruvyl-6-hydroxy-3-cyclohexene-1-carboxylate synthase (568 aa).

The protein belongs to the TPP enzyme family. MenD subfamily. As to quaternary structure, homodimer. Mg(2+) serves as cofactor. Mn(2+) is required as a cofactor. Requires thiamine diphosphate as cofactor.

The enzyme catalyses isochorismate + 2-oxoglutarate + H(+) = 5-enolpyruvoyl-6-hydroxy-2-succinyl-cyclohex-3-ene-1-carboxylate + CO2. It participates in quinol/quinone metabolism; 1,4-dihydroxy-2-naphthoate biosynthesis; 1,4-dihydroxy-2-naphthoate from chorismate: step 2/7. It functions in the pathway quinol/quinone metabolism; menaquinone biosynthesis. Functionally, catalyzes the thiamine diphosphate-dependent decarboxylation of 2-oxoglutarate and the subsequent addition of the resulting succinic semialdehyde-thiamine pyrophosphate anion to isochorismate to yield 2-succinyl-5-enolpyruvyl-6-hydroxy-3-cyclohexene-1-carboxylate (SEPHCHC). In Actinobacillus pleuropneumoniae serotype 3 (strain JL03), this protein is 2-succinyl-5-enolpyruvyl-6-hydroxy-3-cyclohexene-1-carboxylate synthase.